The primary structure comprises 117 residues: VKVPEPFAWNESFATSYKNIDLEHRTLFNGLFALSEFNTRDQLLACKEVFVMHFRDEQGQMEKANYEHFEEHRGIHEGFLEKMGHWKAPVAQKDIKFGMEWLVNHIPTEDFKYKGKL.

His24, His53, Glu57, His72, His76, His105, and Asp110 together coordinate Fe cation.

This sequence belongs to the hemerythrin family. As to quaternary structure, octamer composed of two types of chains: alpha and beta.

Hemerythrin is a respiratory protein in blood cells of certain marine worms. The oxygen-binding site in each chain contains two iron atoms. The chain is Hemerythrin subunit alpha from Lingula anatina (Brachiopod).